The following is a 259-amino-acid chain: Thiazole synthase (259 aa).

Lysine 95 serves as the catalytic Schiff-base intermediate with DXP. 1-deoxy-D-xylulose 5-phosphate is bound by residues glycine 156, 182-183, and 204-205; these read AG and NT.

It belongs to the ThiG family. Homotetramer. Forms heterodimers with either ThiH or ThiS.

It localises to the cytoplasm. It catalyses the reaction [ThiS sulfur-carrier protein]-C-terminal-Gly-aminoethanethioate + 2-iminoacetate + 1-deoxy-D-xylulose 5-phosphate = [ThiS sulfur-carrier protein]-C-terminal Gly-Gly + 2-[(2R,5Z)-2-carboxy-4-methylthiazol-5(2H)-ylidene]ethyl phosphate + 2 H2O + H(+). The protein operates within cofactor biosynthesis; thiamine diphosphate biosynthesis. Functionally, catalyzes the rearrangement of 1-deoxy-D-xylulose 5-phosphate (DXP) to produce the thiazole phosphate moiety of thiamine. Sulfur is provided by the thiocarboxylate moiety of the carrier protein ThiS. In vitro, sulfur can be provided by H(2)S. The chain is Thiazole synthase from Proteus mirabilis (strain HI4320).